A 179-amino-acid polypeptide reads, in one-letter code: Ribosome maturation factor RimM (179 aa).

Residues 96–179 (DNEFYWVDLI…KITVDWGLDY (84 aa)) form the PRC barrel domain.

It belongs to the RimM family. In terms of assembly, binds ribosomal protein uS19.

It is found in the cytoplasm. Functionally, an accessory protein needed during the final step in the assembly of 30S ribosomal subunit, possibly for assembly of the head region. Essential for efficient processing of 16S rRNA. May be needed both before and after RbfA during the maturation of 16S rRNA. It has affinity for free ribosomal 30S subunits but not for 70S ribosomes. The polypeptide is Ribosome maturation factor RimM (Janthinobacterium sp. (strain Marseille) (Minibacterium massiliensis)).